The sequence spans 107 residues: Basic phospholipase A2 sphenotoxin subunit B (107 aa).

Residues tyrosine 27, glycine 29, and glycine 31 each contribute to the Ca(2+) site. Disulfide bonds link cysteine 28-cysteine 44, cysteine 43-cysteine 91, cysteine 50-cysteine 88, cysteine 57-cysteine 81, and cysteine 75-cysteine 86. The active site involves histidine 47. Aspartate 48 contributes to the Ca(2+) binding site. Aspartate 89 is an active-site residue.

It belongs to the phospholipase A2 family. Group II subfamily. D49 sub-subfamily. In terms of assembly, heterodimer of A and B chains; non-covalently linked. The acidic protein (B chain) has phospholipase A2 activity and the A chain weakly inhibits the B chain enzymatic activity but potentiates its lethal potency. In terms of tissue distribution, expressed by the venom gland.

Its subcellular location is the secreted. It carries out the reaction a 1,2-diacyl-sn-glycero-3-phosphocholine + H2O = a 1-acyl-sn-glycero-3-phosphocholine + a fatty acid + H(+). Functionally, heterodimer A-B: Sphenotoxin is a potent neurotoxin that possesses phospholipase A2 (PLA2) activity. It consists of a non-covalent association of a basic PLA2 subunit B with a non-enzymatic subunit A. Monomer B: Not found in vivo. In vitro, potent neurotoxin that possesses phospholipase A2 (PLA2) activity and exerts a lethal action by blocking neuromuscular transmission. Induces paralysis of the hind legs and neuromuscular blockade in mouse phrenic nerve-diaphragm preparations. PLA2 catalyzes the calcium-dependent hydrolysis of the 2-acyl groups in 3-sn-phosphoglycerides. In Ophryacus sphenophrys (Broad-horned pitviper), this protein is Basic phospholipase A2 sphenotoxin subunit B.